Reading from the N-terminus, the 321-residue chain is Glutaminase (321 aa).

7 residues coordinate substrate: S69, N120, E165, N172, Y196, Y248, and V266.

This sequence belongs to the glutaminase family. As to quaternary structure, homotetramer.

It carries out the reaction L-glutamine + H2O = L-glutamate + NH4(+). The polypeptide is Glutaminase (Bacteroides fragilis (strain YCH46)).